The following is a 403-amino-acid chain: MDRSKENCISGPVKATAPVGGPKRVLVTQQFPCQNPLPVNSGQAQRVLCPSNSSQRIPLQAQKLVSSHKPVQNQKQKQLQATSVPHPVSRPLNNTQKSKQPLPSAPENNPEEELASKQKNEESKKRQWALEDFEIGRPLGKGKFGNVYLAREKQSKFILALKVLFKAQLEKAGVEHQLRREVEIQSHLRHPNILRLYGYFHDATRVYLILEYAPLGTVYRELQKLSKFDEQRTATYITELANALSYCHSKRVIHRDIKPENLLLGSAGELKIADFGWSVHAPSSRRTTLCGTLDYLPPEMIEGRMHDEKVDLWSLGVLCYEFLVGKPPFEANTYQETYKRISRVEFTFPDFVTEGARDLISRLLKHNPSQRPMLREVLEHPWITANSSKPSNCQNKESASKQS.

Positions 1–125 (MDRSKENCIS…SKQKNEESKK (125 aa)) are disordered. Composition is skewed to polar residues over residues 27–83 (VTQQ…QATS) and 91–101 (PLNNTQKSKQP). Phosphoserine occurs at positions 41 and 51. Positions 114–125 (LASKQKNEESKK) are enriched in basic and acidic residues. The region spanning 133-383 (FEIGRPLGKG…LREVLEHPWI (251 aa)) is the Protein kinase domain. Residues lysine 143, lysine 162, and 211-213 (EYA) contribute to the ATP site. Aspartate 256 acts as the Proton acceptor in catalysis. Residue lysine 258 forms a Glycyl lysine isopeptide (Lys-Gly) (interchain with G-Cter in SUMO2) linkage. ATP is bound by residues 260-261 (EN) and aspartate 274. The segment at 280 to 293 (HAPSSRRTTLCGTL) is activation segment. Residues threonine 287 and threonine 288 each carry the phosphothreonine modification. Serine 342 is subject to Phosphoserine; by PKA and PAK.

The protein belongs to the protein kinase superfamily. Ser/Thr protein kinase family. Aurora subfamily. In terms of assembly, part of a complex composed of NEDD9, AURKA and CTTN; within the complex NEDD9 acts as a scaffold protein and is required for complex formation. Identified in a complex with AUNIP and NIN. Interacts with FBXL7. Interacts with CPEB1, JTB, TACC1, TPX2, PPP2CA, as well as with the protein phosphatase type 1 (PP1) isoforms PPP1CA, PPP1CB and PPP1CC. Also interacts with its substrates ARHGEF2, BORA, KIF2A, PARD3, and p53/TP53. Interaction with BORA promotes phosphorylation of PLK1. Interacts with CIMAP3. Interacts with GADD45A, competing with its oligomerization. Interacts (via C-terminus) with AUNIP (via C-terminus). Interacts with FRY; this interaction facilitates AURKA-mediated PLK1 phosphorylation. Interacts with SIRT2. Interacts with MYCN; interaction is phospho-independent and triggers AURKA activation; AURKA competes with FBXW7 for binding to unphosphorylated MYCN but not for binding to phosphorylated MYCN. Interacts with HNRNPU. Interacts with AAAS. Interacts with KLHL18 and CUL3. Interacts with FOXP1. Interacts with HDAC6; AURKA-mediated phosphorylation of HDAC6 promotes deacetylation of alpha-tubulin. Activated by phosphorylation at Thr-288; this brings about a change in the conformation of the activation segment. Phosphorylation at Thr-288 varies during the cell cycle and is highest during M phase. Autophosphorylated at Thr-288 upon TPX2 binding. Thr-288 can be phosphorylated by several kinases, including PAK and PKA. Protein phosphatase type 1 (PP1) binds AURKA and inhibits its activity by dephosphorylating Thr-288 during mitosis. Phosphorylation at Ser-342 decreases the kinase activity. PPP2CA controls degradation by dephosphorylating Ser-51 at the end of mitosis. Post-translationally, ubiquitinated by the E3 ubiquitin-protein ligase complex SCF(FBXL7) during mitosis, leading to its degradation by the proteasome. Ubiquitinated by CHFR, leading to its degradation by the proteasome. Ubiquitinated by the anaphase-promoting complex (APC), leading to its degradation by the proteasome. Ubiquitinated by the CUL3-KLHL18 ligase leading to its activation at the centrosome which is required for initiating mitotic entry. Ubiquitination mediated by CUL3-KLHL18 ligase does not lead to its degradation by the proteasome. As to expression, highly expressed in testis and weakly in skeletal muscle, thymus and spleen. Also highly expressed in colon, ovarian, prostate, neuroblastoma, breast and cervical cancer cell lines.

The protein localises to the cytoplasm. It localises to the cytoskeleton. It is found in the microtubule organizing center. Its subcellular location is the centrosome. The protein resides in the spindle pole. The protein localises to the centriole. It localises to the cell projection. It is found in the neuron projection. Its subcellular location is the cilium. The protein resides in the cilium basal body. The protein localises to the basolateral cell membrane. It carries out the reaction L-seryl-[protein] + ATP = O-phospho-L-seryl-[protein] + ADP + H(+). It catalyses the reaction L-threonyl-[protein] + ATP = O-phospho-L-threonyl-[protein] + ADP + H(+). Its activity is regulated as follows. Activation of CDK1, appears to be an upstream event of AURKA activation. Phosphatase inhibitor-2 (PPP1R2) and TPX2 act also as activators. Inactivated by the G2 checkpoint. Inhibited by GADD45A and p53/TP53, and through dephosphorylation by protein phosphatase type 1 (PP1). MLN8054 is also a potent and selective inhibitor. Activated during the early phase of cilia disassembly in the presence of CIMAP3. Inhibited by the small molecule inhibitor VX-680. In terms of biological role, mitotic serine/threonine kinase that contributes to the regulation of cell cycle progression. Associates with the centrosome and the spindle microtubules during mitosis and plays a critical role in various mitotic events including the establishment of mitotic spindle, centrosome duplication, centrosome separation as well as maturation, chromosomal alignment, spindle assembly checkpoint, and cytokinesis. Required for normal spindle positioning during mitosis and for the localization of NUMA1 and DCTN1 to the cell cortex during metaphase. Required for initial activation of CDK1 at centrosomes. Phosphorylates numerous target proteins, including ARHGEF2, BORA, BRCA1, CDC25B, DLGP5, HDAC6, KIF2A, LATS2, NDEL1, PARD3, PPP1R2, PLK1, RASSF1, TACC3, p53/TP53 and TPX2. Phosphorylates MCRS1 which is required for MCRS1-mediated kinetochore fiber assembly and mitotic progression. Regulates KIF2A tubulin depolymerase activity. Important for microtubule formation and/or stabilization. Required for normal axon formation. Plays a role in microtubule remodeling during neurite extension. Also acts as a key regulatory component of the p53/TP53 pathway, and particularly the checkpoint-response pathways critical for oncogenic transformation of cells, by phosphorylating and destabilizing p53/TP53. Phosphorylates its own inhibitors, the protein phosphatase type 1 (PP1) isoforms, to inhibit their activity. Inhibits cilia outgrowth. Required for cilia disassembly via phosphorylation of HDAC6 and subsequent deacetylation of alpha-tubulin. Regulates protein levels of the anti-apoptosis protein BIRC5 by suppressing the expression of the SCF(FBXL7) E3 ubiquitin-protein ligase substrate adapter FBXL7 through the phosphorylation of the transcription factor FOXP1. The sequence is that of Aurora kinase A from Homo sapiens (Human).